Consider the following 280-residue polypeptide: Large ribosomal subunit protein uL2 (280 aa).

Disordered regions lie at residues 33–55 and 199–266; these read LTEG…RRRG and DNSN…KASQ. Basic residues predominate over residues 209 to 219; the sequence is GRMRHKGKRPS.

Belongs to the universal ribosomal protein uL2 family. As to quaternary structure, part of the 50S ribosomal subunit. Forms a bridge to the 30S subunit in the 70S ribosome.

Its function is as follows. One of the primary rRNA binding proteins. Required for association of the 30S and 50S subunits to form the 70S ribosome, for tRNA binding and peptide bond formation. It has been suggested to have peptidyltransferase activity; this is somewhat controversial. Makes several contacts with the 16S rRNA in the 70S ribosome. The sequence is that of Large ribosomal subunit protein uL2 from Ruegeria sp. (strain TM1040) (Silicibacter sp.).